The primary structure comprises 747 residues: Endoglucanase C (747 aa).

Positions 1–37 (MGHVTSPSKRYPASFKRAGSILGVSIALAAFSNVAAA) are cleaved as a signal peptide. A CBM2 domain is found at 38-136 (GCEYVVTNSW…TVNGAACTGG (99 aa)). 3 disulfide bridges follow: Cys-39/Cys-133, Cys-183/Cys-214, and Cys-193/Cys-208. The CBM10 domain occupies 182–211 (QCNWYGTLYPLCVSTTSGWGYENNRSCISP). A disordered region spans residues 226–283 (GSSSPSSISSSSVRSSSSSSVVPPSSSSSSSVPSSSSSSVSSSSVVSSSSSSVSVPGT). The segment covering 227–281 (SSSPSSISSSSVRSSSSSSVVPPSSSSSSSVPSSSSSSVSSSSVVSSSSSSVSVP) has biased composition (low complexity). Residues 280-747 (VPGTGVFRVN…TQLLHNMWGL (468 aa)) are catalytic. Glu-502 (proton donor) is an active-site residue. The Nucleophile role is filled by Glu-652.

It belongs to the glycosyl hydrolase 5 (cellulase A) family.

It catalyses the reaction Endohydrolysis of (1-&gt;4)-beta-D-glucosidic linkages in cellulose, lichenin and cereal beta-D-glucans.. The sequence is that of Endoglucanase C (celC) from Cellvibrio japonicus (strain Ueda107) (Pseudomonas fluorescens subsp. cellulosa).